We begin with the raw amino-acid sequence, 183 residues long: Adenine phosphoribosyltransferase (183 aa).

Belongs to the purine/pyrimidine phosphoribosyltransferase family. Homodimer.

It is found in the cytoplasm. The enzyme catalyses AMP + diphosphate = 5-phospho-alpha-D-ribose 1-diphosphate + adenine. The protein operates within purine metabolism; AMP biosynthesis via salvage pathway; AMP from adenine: step 1/1. Catalyzes a salvage reaction resulting in the formation of AMP, that is energically less costly than de novo synthesis. The protein is Adenine phosphoribosyltransferase of Shewanella oneidensis (strain ATCC 700550 / JCM 31522 / CIP 106686 / LMG 19005 / NCIMB 14063 / MR-1).